We begin with the raw amino-acid sequence, 249 residues long: MSQPAVKASATAAVNPGPDGKGKGAPPPGPAPGSGPAQAPAQPMPAAKGDLPPGSYKLVVFEQENFQGRRVEFSGECLNLGDRGFDRVRSIIVTSGPWVAFEQSNFRGEMFILEKGEYPRWDTWSSSYRSDRLMSFRPIRMDAQEHKLCLFEGANFKGNTMEIQEDDVPSLWVYGFCDRVGSVRVSSGTWVGYQYPGYRGYQYLLEPGDFRHWNDWGAFQPQMQAVRRLRDRQWHREGCFPVLAAEPPK.

The disordered stretch occupies residues 1-49 (MSQPAVKASATAAVNPGPDGKGKGAPPPGPAPGSGPAQAPAQPMPAAKG). Serine 2 bears the N-acetylserine mark. The tract at residues 2 to 55 (SQPAVKASATAAVNPGPDGKGKGAPPPGPAPGSGPAQAPAQPMPAAKGDLPPGS) is N-terminal arm. The segment covering 34–49 (SGPAQAPAQPMPAAKG) has biased composition (low complexity). Beta/gamma crystallin 'Greek key' domains follow at residues 56 to 95 (YKLV…IVTS) and 96 to 140 (GPWV…RPIR). A connecting peptide region spans residues 141-145 (MDAQE). 2 Beta/gamma crystallin 'Greek key' domains span residues 146-187 (HKLC…RVSS) and 188-230 (GTWV…RRLR). A C-terminal arm region spans residues 232–249 (RQWHREGCFPVLAAEPPK).

This sequence belongs to the beta/gamma-crystallin family. In terms of assembly, homo/heterodimer, or complexes of higher-order. The structure of beta-crystallin oligomers seems to be stabilized through interactions between the N-terminal arms. Post-translationally, specific cleavages in the N-terminal arm occur during lens maturation and give rise to truncated forms, leading to impaired oligomerization and protein insolubilization.

In terms of biological role, crystallins are the dominant structural components of the vertebrate eye lens. The chain is Beta-crystallin B1 (CRYBB1) from Sus scrofa (Pig).